A 338-amino-acid chain; its full sequence is Phosphatidate cytidylyltransferase, mitochondrial (338 aa).

This sequence belongs to the TAM41 family. It depends on Mg(2+) as a cofactor.

It is found in the mitochondrion inner membrane. It carries out the reaction a 1,2-diacyl-sn-glycero-3-phosphate + CTP + H(+) = a CDP-1,2-diacyl-sn-glycerol + diphosphate. It participates in phospholipid metabolism; CDP-diacylglycerol biosynthesis; CDP-diacylglycerol from sn-glycerol 3-phosphate: step 3/3. Functionally, catalyzes the conversion of phosphatidic acid (PA) to CDP-diacylglycerol (CDP-DAG), an essential intermediate in the synthesis of phosphatidylglycerol, cardiolipin and phosphatidylinositol. This is Phosphatidate cytidylyltransferase, mitochondrial (tamm41) from Xenopus laevis (African clawed frog).